The primary structure comprises 323 residues: Ig gamma chain C region (323 aa).

3 consecutive Ig-like domains span residues 6–96 (PSVF…KTVA), 114–213 (PSVF…KTIS), and 222–318 (PKVY…KSIS).

In Oryctolagus cuniculus (Rabbit), this protein is Ig gamma chain C region.